The sequence spans 118 residues: Vacuolar ATPase assembly integral membrane protein vma-21 (118 aa).

Topologically, residues 1-35 (MATRRIISQEKTLLEKDDRIGSSPAASEKSNITPA) are cytoplasmic. Residues 36-56 (VPASVIIKLLAFTFAMIVIPI) form a helical membrane-spanning segment. Residues 57-73 (SSYFLTVDRLFKGNSTY) are Lumenal-facing. A helical transmembrane segment spans residues 74 to 94 (AGATAAIMANVVLIGYIIVAM). Topologically, residues 95 to 118 (AEDQSDQENEKKGGGGKGEGKKDL) are cytoplasmic. The segment at 98–118 (QSDQENEKKGGGGKGEGKKDL) is disordered. Residues 102-118 (ENEKKGGGGKGEGKKDL) show a composition bias toward basic and acidic residues. A Prevents secretion from ER motif is present at residues 115-118 (KKDL).

It belongs to the VMA21 family.

The protein resides in the endoplasmic reticulum membrane. It localises to the endoplasmic reticulum-Golgi intermediate compartment membrane. The protein localises to the cytoplasmic vesicle. Its subcellular location is the COPII-coated vesicle membrane. Required for the assembly of the V0 complex of the vacuolar ATPase (V-ATPase) in the endoplasmic reticulum. This Neurospora crassa (strain ATCC 24698 / 74-OR23-1A / CBS 708.71 / DSM 1257 / FGSC 987) protein is Vacuolar ATPase assembly integral membrane protein vma-21 (vma-21).